A 398-amino-acid polypeptide reads, in one-letter code: tRNA-specific 2-thiouridylase MnmA (398 aa).

ATP is bound by residues 20 to 27 and L46; that span reads AMSGGVDS. The Nucleophile role is filled by C114. A disulfide bond links C114 and C210. G138 lines the ATP pocket. The interval 160–162 is interaction with tRNA; that stretch reads RDQ. C210 functions as the Cysteine persulfide intermediate in the catalytic mechanism.

The protein belongs to the MnmA/TRMU family.

It is found in the cytoplasm. It catalyses the reaction S-sulfanyl-L-cysteinyl-[protein] + uridine(34) in tRNA + AH2 + ATP = 2-thiouridine(34) in tRNA + L-cysteinyl-[protein] + A + AMP + diphosphate + H(+). Its function is as follows. Catalyzes the 2-thiolation of uridine at the wobble position (U34) of tRNA, leading to the formation of s(2)U34. The protein is tRNA-specific 2-thiouridylase MnmA of Brucella melitensis biotype 1 (strain ATCC 23456 / CCUG 17765 / NCTC 10094 / 16M).